Reading from the N-terminus, the 466-residue chain is Ribulose bisphosphate carboxylase large chain (466 aa).

K5 carries the N6,N6,N6-trimethyllysine modification. Substrate contacts are provided by N114 and T164. The Proton acceptor role is filled by K166. K168 contacts substrate. 3 residues coordinate Mg(2+): K192, D194, and E195. K192 bears the N6-carboxylysine mark. Residue H285 is the Proton acceptor of the active site. Substrate-binding residues include R286, H318, and S370.

It belongs to the RuBisCO large chain family. Type I subfamily. In terms of assembly, heterohexadecamer of 8 large chains and 8 small chains; disulfide-linked. The disulfide link is formed within the large subunit homodimers. Requires Mg(2+) as cofactor. In terms of processing, the disulfide bond which can form in the large chain dimeric partners within the hexadecamer appears to be associated with oxidative stress and protein turnover.

Its subcellular location is the plastid. The protein localises to the chloroplast. It carries out the reaction 2 (2R)-3-phosphoglycerate + 2 H(+) = D-ribulose 1,5-bisphosphate + CO2 + H2O. The enzyme catalyses D-ribulose 1,5-bisphosphate + O2 = 2-phosphoglycolate + (2R)-3-phosphoglycerate + 2 H(+). RuBisCO catalyzes two reactions: the carboxylation of D-ribulose 1,5-bisphosphate, the primary event in carbon dioxide fixation, as well as the oxidative fragmentation of the pentose substrate in the photorespiration process. Both reactions occur simultaneously and in competition at the same active site. This Drosophyllum lusitanicum (Portuguese sundew) protein is Ribulose bisphosphate carboxylase large chain.